Reading from the N-terminus, the 1813-residue chain is U3 small nucleolar RNA-associated protein 10 (1813 aa).

HEAT repeat units lie at residues 245-283 (DVLI…KASL), 389-427 (SETI…LQFN), 428-464 (ESDT…DIMP), 584-621 (ADMQ…LASK), and 659-695 (IIHH…QDDS). Disordered stretches follow at residues 686 to 705 (IRGP…STGV) and 887 to 912 (DLGS…SSMD). Positions 690 to 705 (RSQDDSDRTRSESTGV) are enriched in basic and acidic residues. HEAT repeat units lie at residues 1058-1095 (QTID…AFEH), 1189-1228 (KIAV…KAHG), 1265-1302 (LSLV…SSND), 1309-1347 (ARVL…KYGK), 1398-1437 (EALP…HVPW), 1678-1715 (LASI…LAVA), and 1769-1806 (ALLP…ILGE).

The protein belongs to the HEATR1/UTP10 family. Component of the ribosomal small subunit (SSU) processome.

The protein resides in the nucleus. It localises to the nucleolus. In terms of biological role, involved in nucleolar processing of pre-18S ribosomal RNA. Involved in ribosome biosynthesis. The chain is U3 small nucleolar RNA-associated protein 10 from Coccidioides immitis (strain RS) (Valley fever fungus).